A 493-amino-acid polypeptide reads, in one-letter code: Vacuolar-processing enzyme (493 aa).

Residues 1–19 form the signal peptide; that stretch reads MGSSQLSTLLFFTIVVTFL. An N-linked (GlcNAc...) asparagine glycan is attached at asparagine 147. Histidine 174 is a catalytic residue. Cysteine 216 (nucleophile) is an active-site residue. The cysteines at positions 249 and 263 are disulfide-linked. N-linked (GlcNAc...) asparagine glycans are attached at residues asparagine 295 and asparagine 331. 2 disulfides stabilise this stretch: cysteine 429–cysteine 459 and cysteine 441–cysteine 476.

It belongs to the peptidase C13 family.

Functionally, asparagine-specific endopeptidase involved in the processing of vacuolar seed protein precursors into the mature forms. This is Vacuolar-processing enzyme from Vicia sativa (Spring vetch).